Reading from the N-terminus, the 335-residue chain is LIM and SH3 domain protein F42H10.3 (335 aa).

In terms of domain architecture, LIM zinc-binding spans Cys-5–Ser-65. Nebulin repeat units follow at residues Val-66–Gly-97 and Thr-98–Arg-132. Residues Asp-128–Ile-142 are compositionally biased toward basic and acidic residues. 2 disordered regions span residues Asp-128 to Ile-151 and Asp-233 to Thr-264. Residues Ser-242–Thr-260 are compositionally biased toward low complexity. Residues Lys-266–Leu-327 form the SH3 domain.

This Caenorhabditis elegans protein is LIM and SH3 domain protein F42H10.3.